Here is a 249-residue protein sequence, read N- to C-terminus: 1-(5-phosphoribosyl)-5-[(5-phosphoribosylamino)methylideneamino] imidazole-4-carboxamide isomerase (249 aa).

Residue aspartate 11 is the Proton acceptor of the active site. The Proton donor role is filled by aspartate 133.

The protein belongs to the HisA/HisF family.

It localises to the cytoplasm. It carries out the reaction 1-(5-phospho-beta-D-ribosyl)-5-[(5-phospho-beta-D-ribosylamino)methylideneamino]imidazole-4-carboxamide = 5-[(5-phospho-1-deoxy-D-ribulos-1-ylimino)methylamino]-1-(5-phospho-beta-D-ribosyl)imidazole-4-carboxamide. The protein operates within amino-acid biosynthesis; L-histidine biosynthesis; L-histidine from 5-phospho-alpha-D-ribose 1-diphosphate: step 4/9. The polypeptide is 1-(5-phosphoribosyl)-5-[(5-phosphoribosylamino)methylideneamino] imidazole-4-carboxamide isomerase (Actinobacillus succinogenes (strain ATCC 55618 / DSM 22257 / CCUG 43843 / 130Z)).